Here is a 310-residue protein sequence, read N- to C-terminus: Methionyl-tRNA formyltransferase (310 aa).

Residue 109 to 112 (SLLP) coordinates (6S)-5,6,7,8-tetrahydrofolate. The disordered stretch occupies residues 283 to 310 (QPQGKKAMPAADWARGARIGDGERFGDD). Over residues 300-310 (RIGDGERFGDD) the composition is skewed to basic and acidic residues.

It belongs to the Fmt family.

It carries out the reaction L-methionyl-tRNA(fMet) + (6R)-10-formyltetrahydrofolate = N-formyl-L-methionyl-tRNA(fMet) + (6S)-5,6,7,8-tetrahydrofolate + H(+). In terms of biological role, attaches a formyl group to the free amino group of methionyl-tRNA(fMet). The formyl group appears to play a dual role in the initiator identity of N-formylmethionyl-tRNA by promoting its recognition by IF2 and preventing the misappropriation of this tRNA by the elongation apparatus. This is Methionyl-tRNA formyltransferase from Thermobifida fusca (strain YX).